The chain runs to 383 residues: MRRTFTAEEKASVFELWKNGTGFSEIANILGSKPGTIFTMLRDTGGIKPHERKRAVAHLTLSEREEIRAGLSAKMSIRAIATALNRSPSTISREVQRNRGRRYYKAVDANNRANRMAKRPKPCLLDQNLPLRKLVLEKLEMKWSPEQISGWLRRTKPRQKTLRISPETIYKTLYFRSREALHHLNIQHLRRSHSLRHGRRHTRKGERGTINIVNGTPIHERSRNIDNRRSLGHWEGDLVSGTKNSHIATLVDRKSRYTIILRLRGKDSVSVNQALTDKFLSLPSELRKSLTWDRGMELARHLEFTVSTGVKVYFCDPQSPWQRGTNENTNGLIRQYFPKKTCLAQYTQHELDLVAAQLNNRPRKTLKFKTPKEIIERGVALTD.

Residues 213–379 enclose the Integrase catalytic domain; that stretch reads VNGTPIHERS…TPKEIIERGV (167 aa).

It belongs to the transposase IS30 family.

Required for the transposition of the insertion element. This chain is Transposase InsI for insertion sequence element IS30C (insI3), found in Escherichia coli (strain K12).